A 111-amino-acid polypeptide reads, in one-letter code: Nucleoid-associated protein LBA0378 (111 aa).

It belongs to the YbaB/EbfC family. As to quaternary structure, homodimer.

The protein localises to the cytoplasm. The protein resides in the nucleoid. In terms of biological role, binds to DNA and alters its conformation. May be involved in regulation of gene expression, nucleoid organization and DNA protection. This Lactobacillus acidophilus (strain ATCC 700396 / NCK56 / N2 / NCFM) protein is Nucleoid-associated protein LBA0378.